Here is a 955-residue protein sequence, read N- to C-terminus: Protein translocase subunit SecA (955 aa).

ATP is bound by residues Gln-90, 108 to 112 (GEGKT), and Asp-509. Positions 537–571 (EGHRPPVPLQRSGAEGGGGFAAKAAPASGPHGHAP) are disordered. Low complexity predominate over residues 557-571 (AAKAAPASGPHGHAP).

The protein belongs to the SecA family. Monomer and homodimer. Part of the essential Sec protein translocation apparatus which comprises SecA, SecYEG and auxiliary proteins SecDF. Other proteins may also be involved.

It localises to the cell inner membrane. The protein localises to the cellular thylakoid membrane. It is found in the cytoplasm. It carries out the reaction ATP + H2O + cellular proteinSide 1 = ADP + phosphate + cellular proteinSide 2.. In terms of biological role, part of the Sec protein translocase complex. Interacts with the SecYEG preprotein conducting channel. Has a central role in coupling the hydrolysis of ATP to the transfer of proteins into and across the cell membrane, serving as an ATP-driven molecular motor driving the stepwise translocation of polypeptide chains across the membrane. Probably participates in protein translocation into and across both the cytoplasmic and thylakoid membranes in cyanobacterial cells. The polypeptide is Protein translocase subunit SecA (Synechococcus sp. (strain WH7803)).